The chain runs to 314 residues: Olfactory receptor 5P66 (314 aa).

Residues 1–28 (MAFLENGNHTAVSEFILLGLTDDPVLRI) lie on the Extracellular side of the membrane. N-linked (GlcNAc...) asparagine glycosylation is present at Asn8. Residues 29 to 49 (VLFTIILCIYLVTVSGNLSTI) traverse the membrane as a helical segment. The Cytoplasmic segment spans residues 50–57 (LLIRVSSQ). The helical transmembrane segment at 58–78 (LHHPMYFFLSHLASADIGLSS) threads the bilayer. Over 79-102 (SVTPNMLVNFLVERSTISYLGCGI) the chain is Extracellular. A disulfide bond links Cys100 and Cys192. A helical transmembrane segment spans residues 103-123 (QLSSAALFGATECFLLAAMAY). Residues 124–136 (DRFMAICNPLLYS) lie on the Cytoplasmic side of the membrane. Residues 137-157 (TKMSTKVCVQLIVGSYIAGFL) traverse the membrane as a helical segment. Over 158 to 199 (NASSFLLSFFSLLFCGQNIINDFFCDFAPLAELSCSDVSVFV) the chain is Extracellular. Residues 200–220 (VVISFSAGTVTMLTVFVIAIS) traverse the membrane as a helical segment. Over 221-240 (YSYILITILKMRSTEGRQKA) the chain is Cytoplasmic. A helical membrane pass occupies residues 241–261 (FSTCTSHLTAVTLFYGTVTFI). The Extracellular portion of the chain corresponds to 262 to 274 (YVMPKSSYSMDQN). Residues 275–295 (KIISVFYMVVVPMLNPLIYSL) form a helical membrane-spanning segment. Over 296–314 (RNNEIKGALKRHFDRKTFS) the chain is Cytoplasmic.

The protein belongs to the G-protein coupled receptor 1 family.

The protein resides in the cell membrane. In terms of biological role, potential odorant receptor. The sequence is that of Olfactory receptor 5P66 from Mus musculus (Mouse).